Here is a 90-residue protein sequence, read N- to C-terminus: Small ribosomal subunit protein bS16 (90 aa).

This sequence belongs to the bacterial ribosomal protein bS16 family.

This chain is Small ribosomal subunit protein bS16, found in Streptococcus gordonii (strain Challis / ATCC 35105 / BCRC 15272 / CH1 / DL1 / V288).